The sequence spans 257 residues: 1-(5-phosphoribosyl)-5-[(5-phosphoribosylamino)methylideneamino] imidazole-4-carboxamide isomerase (257 aa).

Catalysis depends on Asp-8, which acts as the Proton acceptor. The Proton donor role is filled by Asp-129.

The protein belongs to the HisA/HisF family.

The protein localises to the cytoplasm. The catalysed reaction is 1-(5-phospho-beta-D-ribosyl)-5-[(5-phospho-beta-D-ribosylamino)methylideneamino]imidazole-4-carboxamide = 5-[(5-phospho-1-deoxy-D-ribulos-1-ylimino)methylamino]-1-(5-phospho-beta-D-ribosyl)imidazole-4-carboxamide. The protein operates within amino-acid biosynthesis; L-histidine biosynthesis; L-histidine from 5-phospho-alpha-D-ribose 1-diphosphate: step 4/9. The sequence is that of 1-(5-phosphoribosyl)-5-[(5-phosphoribosylamino)methylideneamino] imidazole-4-carboxamide isomerase from Crocosphaera subtropica (strain ATCC 51142 / BH68) (Cyanothece sp. (strain ATCC 51142)).